The sequence spans 29 residues: Neurotoxin BmK A3-6 (29 aa).

Post-translationally, contains 3 disulfide bonds. As to expression, expressed by the venom gland.

The protein localises to the secreted. This Olivierus martensii (Manchurian scorpion) protein is Neurotoxin BmK A3-6.